We begin with the raw amino-acid sequence, 249 residues long: Aspartate/glutamate leucyltransferase (249 aa).

Belongs to the R-transferase family. Bpt subfamily.

The protein localises to the cytoplasm. It carries out the reaction N-terminal L-glutamyl-[protein] + L-leucyl-tRNA(Leu) = N-terminal L-leucyl-L-glutamyl-[protein] + tRNA(Leu) + H(+). The catalysed reaction is N-terminal L-aspartyl-[protein] + L-leucyl-tRNA(Leu) = N-terminal L-leucyl-L-aspartyl-[protein] + tRNA(Leu) + H(+). Its function is as follows. Functions in the N-end rule pathway of protein degradation where it conjugates Leu from its aminoacyl-tRNA to the N-termini of proteins containing an N-terminal aspartate or glutamate. The chain is Aspartate/glutamate leucyltransferase from Azorhizobium caulinodans (strain ATCC 43989 / DSM 5975 / JCM 20966 / LMG 6465 / NBRC 14845 / NCIMB 13405 / ORS 571).